A 664-amino-acid chain; its full sequence is Macrolide export ATP-binding/permease protein MacB (664 aa).

The ABC transporter domain occupies 8–246 (LEVHNLVREF…ELNKDPDAAP (239 aa)). Residue 44-51 (GQSGSGKS) coordinates ATP. The next 4 helical transmembrane spans lie at 287-307 (FLTM…VALG), 543-563 (IAVI…LVSV), 587-607 (FLIE…LLSL), and 629-649 (SIVA…FLPA).

Belongs to the ABC transporter superfamily. Macrolide exporter (TC 3.A.1.122) family. In terms of assembly, homodimer. Part of the tripartite efflux system MacAB-TolC, which is composed of an inner membrane transporter, MacB, a periplasmic membrane fusion protein, MacA, and an outer membrane component, TolC. The complex forms a large protein conduit and can translocate molecules across both the inner and outer membranes. Interacts with MacA.

It localises to the cell inner membrane. Its function is as follows. Part of the tripartite efflux system MacAB-TolC. MacB is a non-canonical ABC transporter that contains transmembrane domains (TMD), which form a pore in the inner membrane, and an ATP-binding domain (NBD), which is responsible for energy generation. Confers resistance against macrolides. This Acinetobacter baylyi (strain ATCC 33305 / BD413 / ADP1) protein is Macrolide export ATP-binding/permease protein MacB.